Consider the following 134-residue polypeptide: Putative integral membrane protein YxzK (134 aa).

4 consecutive transmembrane segments (helical) span residues Val3 to Ile23, Ile35 to Ile55, Gly58 to Ile78, and Leu89 to Ala109.

Its subcellular location is the cell membrane. The chain is Putative integral membrane protein YxzK (yxzK) from Bacillus subtilis (strain 168).